The primary structure comprises 446 residues: C-type lectin domain family 18 member C (446 aa).

An N-terminal signal peptide occupies residues 1–26 (MLHPETSPGRGHLLAVLLALLGTAWA). Residues 52–182 (LSLHNRLRSW…AAIEAFVCAY (131 aa)) form the SCP domain. N-linked (GlcNAc...) asparagine glycosylation is present at N144. In terms of domain architecture, EGF-like spans 228–261 (PRNPCRMSCQNHGRLNISTCHCHCPPGYTGRYCQ). Disulfide bonds link C236–C249, C251–C260, C327–C432, and C408–C424. Positions 306–433 (IDGDCFMVSS…CKTRNRYICQ (128 aa)) constitute a C-type lectin domain.

As to expression, detected in peripheral blood cells.

The protein resides in the secreted. It localises to the endoplasmic reticulum. Its subcellular location is the golgi apparatus. The protein localises to the endosome. Binds polysaccharidesin a Ca(2+)-independent manner with a preferentially binding to fucoidan, beta-glucans and galactans. The protein is C-type lectin domain family 18 member C (CLEC18C) of Homo sapiens (Human).